The chain runs to 527 residues: Formate--tetrahydrofolate ligase (527 aa).

53–60 is an ATP binding site; that stretch reads TSSGEGKT.

Belongs to the formate--tetrahydrofolate ligase family.

It carries out the reaction (6S)-5,6,7,8-tetrahydrofolate + formate + ATP = (6R)-10-formyltetrahydrofolate + ADP + phosphate. It functions in the pathway one-carbon metabolism; tetrahydrofolate interconversion. This Acholeplasma laidlawii (strain PG-8A) protein is Formate--tetrahydrofolate ligase.